Consider the following 328-residue polypeptide: Gonadotropin-releasing hormone receptor (328 aa).

Topologically, residues 1–38 are extracellular; it reads MANGDSPDQNENHCSAINSSILLTPGSLPTLTLSGKIR. The N-linked (GlcNAc...) asparagine glycan is linked to N18. A helical transmembrane segment spans residues 39–58; that stretch reads VTVTFFLFLLSTIFNTSFLL. The Cytoplasmic segment spans residues 59 to 77; that stretch reads KLQNWTQRKEKRKKLSKMK. A helical transmembrane segment spans residues 78–97; sequence VLLKHLTLANLLETLIVMPL. The Extracellular segment spans residues 98–115; that stretch reads DGMWNITVQWYAGELLCK. A glycan (N-linked (GlcNAc...) asparagine) is linked at N102. A disulfide bond links C114 and C196. A helical membrane pass occupies residues 116–137; it reads VLSYLKLFSMYAPAFMMVVISL. Topologically, residues 138–164 are cytoplasmic; the sequence is DRSLAITRPLAVKSNSKLGQFMIGLAW. The helical transmembrane segment at 165–184 threads the bilayer; that stretch reads LLSSIFAGPQLYIFGMIHLA. The Extracellular portion of the chain corresponds to 185 to 212; it reads DDSGQTEGFSQCVTHCSFPQWWHQAFYN. The helical transmembrane segment at 213 to 232 threads the bilayer; it reads FFTFSCLFIIPLLIMLICNA. Over 233 to 281 the chain is Cytoplasmic; it reads KIIFTLTRVLHQDPHKLQLNQSKNNIPQARLRTLKMTVAFATSFTVCWT. A helical transmembrane segment spans residues 282–300; the sequence is PYYVLGIWYWFDPDMVNRV. Residues 301 to 306 are Extracellular-facing; the sequence is SDPVNH. Residues 307 to 326 form a helical membrane-spanning segment; that stretch reads FFFLFAFLNPCFDPLIYGYF. At 327–328 the chain is on the cytoplasmic side; that stretch reads SL.

Belongs to the G-protein coupled receptor 1 family.

Its subcellular location is the cell membrane. In terms of biological role, receptor for gonadotropin releasing hormone (GnRH) that mediates the action of GnRH to stimulate the secretion of the gonadotropic hormones luteinizing hormone (LH) and follicle-stimulating hormone (FSH). This receptor mediates its action by association with G-proteins that activate a phosphatidylinositol-calcium second messenger system. The polypeptide is Gonadotropin-releasing hormone receptor (GNRHR) (Ovis aries (Sheep)).